The chain runs to 941 residues: Protein BREAST CANCER SUSCEPTIBILITY 1 homolog (941 aa).

An RING-type zinc finger spans residues 16–54 (CPICLSLYNSAVSLSCNHVFCNACIVKSMKMDATCPVCK). 2 disordered regions span residues 87–282 (FVSQ…ILPS) and 303–528 (KVKV…GKDD). 2 stretches are compositionally biased toward basic and acidic residues: residues 96–115 (SDKE…DKNR) and 125–136 (KRNEYGKTKEID). Polar residues predominate over residues 157–173 (LLQNLSAESLTKPTESV). Residues 175 to 196 (TAEKPKDYTENTVIRLDEHPSL) show a composition bias toward basic and acidic residues. Polar residues predominate over residues 216–236 (NSSQRTESDQLLGTTPVNVPS). Residues 242–255 (DSDHESPSKEDEQQ) show a composition bias toward basic and acidic residues. The short motif at 298–305 (QKKLPKVK) is the Nuclear localization signal 1 element. 2 stretches are compositionally biased toward polar residues: residues 329-357 (GVSQ…SGTI) and 376-391 (SKAQ…NVSN). Composition is skewed to basic and acidic residues over residues 428 to 453 (GKGD…EKPS) and 477 to 487 (KTSEKKLKLDS). A Nuclear localization signal 2 motif is present at residues 444 to 451 (EKRSPTEK). Polar residues predominate over residues 489–498 (MISSKATQPH). Residues 512-528 (DKQDSRNNRKSTVGKDD) show a composition bias toward basic and acidic residues. The C2HC pre-PHD-type zinc finger occupies 561-612 (KFTCAFCQCSEDTEASGEMTHYYRGEPVSADFNGGSKVIHVHKNCAEWAPNV). Residues 632–681 (ISCSCCGLKGAALGCYNKSCKNSFHVTCAKLIPECRWDNVKFVMLCPLDA) form a PHD-type; degenerate zinc finger. 2 consecutive BRCT domains span residues 724–819 (KQFH…PYEI) and 840–941 (KKPK…LVLI).

As to quaternary structure, forms heterodimer with BARD1/ROW1. As to expression, expressed ubiquitously with highest levels in flower buds. Mostly expressed in flowers and siliques, and, to a lower extent, in roots, rosette leaves, inflorescence and young cauline leaves.

It is found in the nucleus. Its function is as follows. Plays a role in DNA repair and in cell-cycle control. Required for the repair of DNA double-strand breaks (DSBs), both natural and induced by genotoxic stress, by homologous recombination (HR). In Arabidopsis thaliana (Mouse-ear cress), this protein is Protein BREAST CANCER SUSCEPTIBILITY 1 homolog.